The chain runs to 619 residues: Dihydroxy-acid dehydratase (619 aa).

A Mg(2+)-binding site is contributed by Asp-81. Residue Cys-122 coordinates [2Fe-2S] cluster. Mg(2+)-binding residues include Asp-123 and Lys-124. Residue Lys-124 is modified to N6-carboxylysine. Cys-198 contacts [2Fe-2S] cluster. Glu-494 is a Mg(2+) binding site. Ser-520 (proton acceptor) is an active-site residue.

It belongs to the IlvD/Edd family. As to quaternary structure, homodimer. [2Fe-2S] cluster is required as a cofactor. The cofactor is Mg(2+).

The enzyme catalyses (2R)-2,3-dihydroxy-3-methylbutanoate = 3-methyl-2-oxobutanoate + H2O. It catalyses the reaction (2R,3R)-2,3-dihydroxy-3-methylpentanoate = (S)-3-methyl-2-oxopentanoate + H2O. It participates in amino-acid biosynthesis; L-isoleucine biosynthesis; L-isoleucine from 2-oxobutanoate: step 3/4. It functions in the pathway amino-acid biosynthesis; L-valine biosynthesis; L-valine from pyruvate: step 3/4. In terms of biological role, functions in the biosynthesis of branched-chain amino acids. Catalyzes the dehydration of (2R,3R)-2,3-dihydroxy-3-methylpentanoate (2,3-dihydroxy-3-methylvalerate) into 2-oxo-3-methylpentanoate (2-oxo-3-methylvalerate) and of (2R)-2,3-dihydroxy-3-methylbutanoate (2,3-dihydroxyisovalerate) into 2-oxo-3-methylbutanoate (2-oxoisovalerate), the penultimate precursor to L-isoleucine and L-valine, respectively. This Neisseria gonorrhoeae (strain ATCC 700825 / FA 1090) protein is Dihydroxy-acid dehydratase.